A 64-amino-acid polypeptide reads, in one-letter code: Large ribosomal subunit protein bL35 (64 aa).

A compositionally biased stretch (basic residues) spans 1–15 (MPKNKTHSGASKRFR). Residues 1–20 (MPKNKTHSGASKRFRVTGSG) form a disordered region.

It belongs to the bacterial ribosomal protein bL35 family.

The chain is Large ribosomal subunit protein bL35 from Nocardioides sp. (strain ATCC BAA-499 / JS614).